The following is a 107-amino-acid chain: High mobility group protein HMG-I/HMG-Y (107 aa).

Positions 1–13 are enriched in polar residues; sequence MSESGSKSSQPLA. Positions 1–107 are disordered; it reads MSESGSKSSQ…ISQESSEEEQ (107 aa). Residue Ser-2 is modified to N-acetylserine. Position 7 is an N6-acetyllysine (Lys-7). Position 8 is an ADP-ribosylserine (Ser-8). Ser-9 is subject to ADP-ribosylserine; alternate. Ser-9 carries the post-translational modification Phosphoserine; alternate. Lys-15 carries the post-translational modification N6-acetyllysine; alternate. Lys-15 is covalently cross-linked (Glycyl lysine isopeptide (Lys-Gly) (interchain with G-Cter in SUMO2); alternate). A compositionally biased stretch (basic and acidic residues) spans 15-24; that stretch reads KQEKDGTEKR. Residues 21 to 31 constitute a DNA-binding region (a.T hook 1); that stretch reads TEKRGRGRPRK. Position 26 is an asymmetric dimethylarginine; alternate (Arg-26). Arg-26 bears the Omega-N-methylarginine; alternate mark. Residue Arg-26 is modified to Symmetric dimethylarginine; alternate. A Phosphoserine; by HIPK2 and CDC2 modification is found at Ser-36. Thr-39 carries the phosphothreonine modification. Ser-44 and Ser-49 each carry phosphoserine. Thr-53 carries the phosphothreonine; by HIPK2 and CDC2 modification. DNA-binding regions (a.T hook) lie at residues 53–63 and 78–89; these read TPKRPRGRPKG and APGRKPRGRPKK. The interaction with HIPK2 stretch occupies residues 53–77; sequence TPKRPRGRPKGSKNKGAAKTRKVTT. Residues 55-74 are compositionally biased toward basic residues; the sequence is KRPRGRPKGSKNKGAAKTRK. Asymmetric dimethylarginine; by PRMT6; alternate occurs at positions 58 and 60. Omega-N-methylarginine; by PRMT6; alternate is present on residues Arg-58 and Arg-60. Residues 93-107 show a composition bias toward acidic residues; sequence EEEEGISQESSEEEQ. A phosphoserine mark is found at Ser-99, Ser-102, and Ser-103.

It belongs to the HMGA family. Interacts with HIPK2. In terms of processing, isoforms HMG-I and HMG-Y can be phosphorylated by HIPK2. Phosphorylation may modulate DNA-binding affinity. Post-translationally, methylation at Arg-58 is mutually exclusive with methylation at Arg-60.

The protein resides in the nucleus. It localises to the chromosome. In terms of biological role, HMG-I/Y bind preferentially to the minor groove of A+T rich regions in double-stranded DNA. It is suggested that these proteins could function in nucleosome phasing and in the 3'-end processing of mRNA transcripts. They are also involved in the transcription regulation of genes containing, or in close proximity to A+T-rich regions. This Mus musculus (Mouse) protein is High mobility group protein HMG-I/HMG-Y (Hmga1).